Consider the following 68-residue polypeptide: DNA-directed RNA polymerase subunit omega (68 aa).

This sequence belongs to the RNA polymerase subunit omega family. As to quaternary structure, the RNAP catalytic core consists of 2 alpha, 1 beta, 1 beta' and 1 omega subunit. When a sigma factor is associated with the core the holoenzyme is formed, which can initiate transcription.

The catalysed reaction is RNA(n) + a ribonucleoside 5'-triphosphate = RNA(n+1) + diphosphate. In terms of biological role, promotes RNA polymerase assembly. Latches the N- and C-terminal regions of the beta' subunit thereby facilitating its interaction with the beta and alpha subunits. The sequence is that of DNA-directed RNA polymerase subunit omega from Listeria monocytogenes serotype 4b (strain CLIP80459).